The chain runs to 291 residues: MGDDAKAKEFLDAADKRLRGGNFFKMFGGGSSRYDDAASDYTKAANLFKMSKKWDQAGAAFQKAAECFLKGSSKHDAASSYVLAAGCYKKGNVIDAITCLKAAIEYYTDEGRFAISAKHQKEIAELYEAEGDFDQAIASYQIASDYFDGENSTVSSHQCLLKIALFSAQLERYEKSIEIYEQVAAASLDNNLTQWGCKEYFLRACLCYLAADDVVGAERALQRYKDMQASFNSTRECRLLDGIIQACRNNNVEDFTNEVAEFNSISPLDSWKTSILLRIKNTINRETESVV.

TPR repeat units follow at residues 14–51 (ADKR…FKMS), 77–110 (AASS…YTDE), 117–150 (AKHQ…FDGE), and 157–190 (HQCL…SLDN).

The protein belongs to the SNAP family. Interacts with nsfA and probably SNARE proteins.

It is found in the cytoplasmic vesicle membrane. Its function is as follows. May be required for vesicular transport between the endoplasmic reticulum and the Golgi apparatus. Involved in vesicle fusion with nsfA and probably SNARE proteins. This is Alpha-soluble NSF attachment protein (snpA) from Dictyostelium discoideum (Social amoeba).